The chain runs to 364 residues: Zinc finger protein CONSTANS-LIKE 12 (364 aa).

Residues Cys-5, Cys-8, Cys-28, and His-33 each coordinate Zn(2+). The B box-type 1; atypical zinc-finger motif lies at 5-47; that stretch reads CDHCATSQALIYCKSDLAKLCLNCDVHVHSANPLSHRHIRSLI. Residues 48-88 form a B box-type 2; degenerate zinc finger; the sequence is CEKCFSQPAAIRCLDEKVSYCQGCHWHESNCSELGHRVQSL. The CCT domain occupies 280 to 322; sequence QDCGMSPGFIMSEAPWETNFEVSCPQARNEAKLRYKEKKLKRS.

The protein belongs to the CONSTANS family.

The protein resides in the nucleus. This is Zinc finger protein CONSTANS-LIKE 12 (COL12) from Arabidopsis thaliana (Mouse-ear cress).